Here is a 467-residue protein sequence, read N- to C-terminus: UDP-N-acetylmuramate--L-alanine ligase (467 aa).

112–118 (GTHGKTT) provides a ligand contact to ATP.

Belongs to the MurCDEF family.

It localises to the cytoplasm. It carries out the reaction UDP-N-acetyl-alpha-D-muramate + L-alanine + ATP = UDP-N-acetyl-alpha-D-muramoyl-L-alanine + ADP + phosphate + H(+). Its pathway is cell wall biogenesis; peptidoglycan biosynthesis. Functionally, cell wall formation. This Polaromonas sp. (strain JS666 / ATCC BAA-500) protein is UDP-N-acetylmuramate--L-alanine ligase.